The chain runs to 581 residues: ATP-dependent lipid A-core flippase (581 aa).

6 helical membrane passes run 21–41 (TVAI…ALFI), 65–85 (FVVI…SYCL), 138–158 (ALLI…VMFY), 161–181 (WQLS…VTVV), 246–266 (LSVS…LWVV), and 271–291 (MIDT…MMLL). Residues 24–306 (IVAIIGMIGY…LANVNSDMQR (283 aa)) form the ABC transmembrane type-1 domain. The ABC transporter domain occupies 338–575 (IEVKNVTFKY…NGTYSALCKM (238 aa)). 372-379 (GRSGSGKS) lines the ATP pocket.

The protein belongs to the ABC transporter superfamily. Lipid exporter (TC 3.A.1.106) family. As to quaternary structure, homodimer.

It localises to the cell inner membrane. It carries out the reaction ATP + H2O + lipid A-core oligosaccharideSide 1 = ADP + phosphate + lipid A-core oligosaccharideSide 2.. Its function is as follows. Involved in lipopolysaccharide (LPS) biosynthesis. Translocates lipid A-core from the inner to the outer leaflet of the inner membrane. Transmembrane domains (TMD) form a pore in the inner membrane and the ATP-binding domain (NBD) is responsible for energy generation. The sequence is that of ATP-dependent lipid A-core flippase from Pseudoalteromonas translucida (strain TAC 125).